We begin with the raw amino-acid sequence, 105 residues long: Defensin-like protein (105 aa).

Residues methionine 1 to alanine 25 form the signal peptide. Disulfide bonds link cysteine 28–cysteine 72, cysteine 39–cysteine 59, cysteine 45–cysteine 66, and cysteine 49–cysteine 68.

Belongs to the DEFL family. In terms of tissue distribution, flower. Found in petals, stamen and pistils, but not in sepals. In particular, accumulation in a configuration surrounding the inner reproductive whorls.

It localises to the secreted. Its subcellular location is the cell wall. The protein localises to the vacuole. Functionally, involved in floral organogenesis. May play a protective role in flowers by protecting the reproductive organs from potential pathogen attack. This is Defensin-like protein (FST) from Nicotiana tabacum (Common tobacco).